Consider the following 189-residue polypeptide: Potassium-transporting ATPase KdpC subunit (189 aa).

The chain crosses the membrane as a helical span at residues 8–28 (LVMLILLTLITGIAYPLLTTG).

This sequence belongs to the KdpC family. In terms of assembly, the system is composed of three essential subunits: KdpA, KdpB and KdpC.

Its subcellular location is the cell inner membrane. Functionally, part of the high-affinity ATP-driven potassium transport (or Kdp) system, which catalyzes the hydrolysis of ATP coupled with the electrogenic transport of potassium into the cytoplasm. This subunit acts as a catalytic chaperone that increases the ATP-binding affinity of the ATP-hydrolyzing subunit KdpB by the formation of a transient KdpB/KdpC/ATP ternary complex. The chain is Potassium-transporting ATPase KdpC subunit from Serratia proteamaculans (strain 568).